Here is a 164-residue protein sequence, read N- to C-terminus: Transcription elongation factor GreA (164 aa).

Residues 50-76 are a coiled coil; that stretch reads YHAAREEQGQQEARIRQLQDLLSNAKV.

Belongs to the GreA/GreB family.

Functionally, necessary for efficient RNA polymerase transcription elongation past template-encoded arresting sites. The arresting sites in DNA have the property of trapping a certain fraction of elongating RNA polymerases that pass through, resulting in locked ternary complexes. Cleavage of the nascent transcript by cleavage factors such as GreA or GreB allows the resumption of elongation from the new 3'terminus. GreA releases sequences of 2 to 3 nucleotides. The polypeptide is Transcription elongation factor GreA (Mycobacterium bovis (strain ATCC BAA-935 / AF2122/97)).